A 42-amino-acid polypeptide reads, in one-letter code: Photosystem I reaction center subunit IX (42 aa).

Residues 7 to 27 traverse the membrane as a helical segment; the sequence is YLSVAPVLSTLWFGALAGLLI.

This sequence belongs to the PsaJ family.

It localises to the plastid. The protein resides in the chloroplast thylakoid membrane. In terms of biological role, may help in the organization of the PsaE and PsaF subunits. This Platanus occidentalis (Sycamore) protein is Photosystem I reaction center subunit IX.